The chain runs to 1041 residues: Beta-galactosidase (1041 aa).

Substrate contacts are provided by N103 and D201. Na(+) is bound at residue D201. Residues E415, H417, and E460 each contribute to the Mg(2+) site. Substrate is bound by residues E460 and 536–539 (EYAH). Residue E460 is the Proton donor of the active site. The active-site Nucleophile is the E536. N596 contacts Mg(2+). Residues F600 and N603 each contribute to the Na(+) site. Residues N603 and W1016 each coordinate substrate.

It belongs to the glycosyl hydrolase 2 family. Homotetramer. It depends on Mg(2+) as a cofactor. Na(+) serves as cofactor.

It carries out the reaction Hydrolysis of terminal non-reducing beta-D-galactose residues in beta-D-galactosides.. In Alteromonas mediterranea (strain DSM 17117 / CIP 110805 / LMG 28347 / Deep ecotype), this protein is Beta-galactosidase.